A 387-amino-acid polypeptide reads, in one-letter code: Odorant receptor 94a (387 aa).

The Cytoplasmic portion of the chain corresponds to M1–R45. A helical membrane pass occupies residues F46–I66. Residues S67–Q75 are Extracellular-facing. The helical transmembrane segment at V76–Y96 threads the bilayer. The Cytoplasmic segment spans residues R97 to W133. The helical transmembrane segment at F134 to L154 threads the bilayer. At F155 to T191 the chain is on the extracellular side. A helical membrane pass occupies residues C192 to L212. Topologically, residues Y213–R255 are cytoplasmic. The helical transmembrane segment at I256–G276 threads the bilayer. The Extracellular segment spans residues Y277–Q290. The helical transmembrane segment at F291–Y311 threads the bilayer. The Cytoplasmic portion of the chain corresponds to G312–A362. The chain crosses the membrane as a helical span at residues V363–L383. An N-linked (GlcNAc...) asparagine glycan is attached at N384. Over N384 to N387 the chain is Extracellular.

Belongs to the insect chemoreceptor superfamily. Heteromeric odorant receptor channel (TC 1.A.69) family. Or2a subfamily. As to quaternary structure, interacts with Orco. Complexes exist early in the endomembrane system in olfactory sensory neurons (OSNs), coupling these complexes to the conserved ciliary trafficking pathway.

It localises to the cell membrane. Functionally, odorant receptor which mediates acceptance or avoidance behavior, depending on its substrates. The odorant receptor repertoire encodes a large collection of odor stimuli that vary widely in identity, intensity, and duration. May form a complex with Orco to form odorant-sensing units, providing sensitive and prolonged odorant signaling and calcium permeability. In Drosophila melanogaster (Fruit fly), this protein is Odorant receptor 94a (Or94a).